We begin with the raw amino-acid sequence, 920 residues long: MDWSQTLNLPKTDFPMRANLAQREPQFLRFWEENDIFKKMLKKNRNNKKFILHDGPPYANGDIHLGHALNKVLKDIVNKYKSLQGYYTPYIPGWDTHGLPIEQQVIKKLGVNRHEVDPVEFRKKCKEFALSYIDIQRQQFKRLGVFGEWEDPYMTLDPKFEARQIRVFGEMAKKGYIYKGLKPVYWCPSCETALAEAEIEYQEDKTYSIYVKFEVIDDKGLFANLNLSGKKVYIVIWTTTTWTLPGNLAIALNTDFDYSLVDVGNEILIVASELVERVMKTNKIDQYHEIARFKGKDLEYVKCKHPFLDRTSLVILGEHVTLEAGTGCVHTAPGHGEEDFEVCERYNIPVIVPVDNKGYLTQEAGKFAGLFYEDSNKEIAKELEASDHLLGVEKITHQYPHCWRCKNPVIFRATEQWFASVKGFREEALKAVDDVKWVPEWGRDRIYNMIADRQDWCISRQRIWGVPIPIFYCKNCRKELITDETIDHIAKIFEKEGSDAWFSKDVKELLPEGTKCPVCGCMEFEKETDIMDVWFDSGSSHAYVLESREDLEWPCDMYLEGNDQYRGWFQSSLLTAVATKGRAPYRIVLTHGFVVDGEGKKMSKSEGNVISPFDIINEFGADILRLWCVSADYTTDMRISKDIIKQLTEIYRKIRNTARFLLGNLYDFNPKTDKVGCENLKEIDKWALQRLYKLIEKVTKAYEEYDYNQVYHLVHNFCVIDMSNLYLDINKDRLYASKSESLDRRSAQTVMYEILVALTKLIAPILSFTAEEIWQNIIFKEEDAESVFLTSWPKVNENILKDETLEEKWNKIIEIKDIVAKQLEIARNEKLIGSSLDSKVKIFAKGNIKRFIEENKDIIQEVLIVSQLEVEEGDSDQIKVEVYKADGLKCERCWKFDTMVGKNEENLNVCPRCYEVVKVK.

A 'HIGH' region motif is present at residues 57–67 (PYANGDIHLGH). Glu560 contributes to the L-isoleucyl-5'-AMP binding site. A 'KMSKS' region motif is present at residues 601–605 (KMSKS). Lys604 contacts ATP. 4 residues coordinate Zn(2+): Cys890, Cys893, Cys910, and Cys913.

Belongs to the class-I aminoacyl-tRNA synthetase family. IleS type 1 subfamily. As to quaternary structure, monomer. It depends on Zn(2+) as a cofactor.

Its subcellular location is the cytoplasm. The enzyme catalyses tRNA(Ile) + L-isoleucine + ATP = L-isoleucyl-tRNA(Ile) + AMP + diphosphate. Functionally, catalyzes the attachment of isoleucine to tRNA(Ile). As IleRS can inadvertently accommodate and process structurally similar amino acids such as valine, to avoid such errors it has two additional distinct tRNA(Ile)-dependent editing activities. One activity is designated as 'pretransfer' editing and involves the hydrolysis of activated Val-AMP. The other activity is designated 'posttransfer' editing and involves deacylation of mischarged Val-tRNA(Ile). The polypeptide is Isoleucine--tRNA ligase (Caldicellulosiruptor saccharolyticus (strain ATCC 43494 / DSM 8903 / Tp8T 6331)).